A 133-amino-acid polypeptide reads, in one-letter code: ATP synthase epsilon chain, chloroplastic (133 aa).

This sequence belongs to the ATPase epsilon chain family. F-type ATPases have 2 components, CF(1) - the catalytic core - and CF(0) - the membrane proton channel. CF(1) has five subunits: alpha(3), beta(3), gamma(1), delta(1), epsilon(1). CF(0) has three main subunits: a, b and c.

It localises to the plastid. It is found in the chloroplast thylakoid membrane. Its function is as follows. Produces ATP from ADP in the presence of a proton gradient across the membrane. The polypeptide is ATP synthase epsilon chain, chloroplastic (Lactuca sativa (Garden lettuce)).